The sequence spans 434 residues: Fc receptor-like protein 6 (434 aa).

A signal peptide spans 1–19; the sequence is MLLWTAVLLFVPCVGKTVW. Ig-like C2-type domains lie at 20–95, 111–197, and 207–293; these read LYLQ…QTFT, PPVL…PQLE, and PVLT…KKLS. Residues 20-307 are Extracellular-facing; the sequence is LYLQAWPNPV…QVLFTPASNW (288 aa). Intrachain disulfides connect cysteine 39/cysteine 83, cysteine 132/cysteine 180, and cysteine 228/cysteine 276. N-linked (GlcNAc...) asparagine glycosylation occurs at asparagine 65. A glycan (N-linked (GlcNAc...) asparagine) is linked at asparagine 273. The chain crosses the membrane as a helical span at residues 308 to 328; it reads LVPWLPASLLGLMVIAAALLV. The Cytoplasmic segment spans residues 329-434; that stretch reads YVRSWRKAGP…PLSDCEEVLC (106 aa). Positions 369–374 match the ITIM motif motif; sequence VVYSVV. The residue at position 371 (tyrosine 371) is a Phosphotyrosine.

In terms of assembly, interacts (tyrosine phosphorylated) with PTPN11. Interacts (tyrosine phosphorylated) with PTPN6, INPP5D, INPPL1 and GRB2. Interacts with class II MHC HLA-DR when the alpha chain is associated with a beta-1, beta-4 or a beta-5 but not a beta-3 chain. In terms of processing, phosphorylated on Tyr residues. Tyrosine phosphorylation induces association with phosphatase PTPN11, PTPN6, INPP5D, INPPL1 and GRB2. As to expression, expressed by cytolytic cells including NK cells, effector and effector-memory CD8(+) T-cells, and a subset of NKT cells (at protein level). Also expressed in gamma delta T cells and in a rare subset of effector CD4(+) T-cells (at protein level). Expressed in spleen, skin, peripheral blood leukocytes, liver, lung, bone marrow, small intestine and placenta. Expression among T-cells is greatly expanded in HIV-1 infected individuals, and includes not only effector and effector-memory CD8(+) T-cells but also populations of CD4(+) T-cells. Expression among CD8(+) T-cells and NK cells is expanded in individuals with chronic lymphocytic leukemia (CLL) but is reduced in PBMCs from patients with acute (AML), chronic myeloid leukemia (CML) and non-Hodgkin's lymphoma. Expression is higher in PBMCs and/or CD3(+) cells of patients with autoimmune diseases, such as rheumatoid arthritis (RA), systemic lupus erythematosus (SLE) and idiopathic thrombocytopenia purpura (ITP). In contrast, expression in CD3(+) cells from patients with lupus anticoagulans (LA) is higher.

It localises to the cell membrane. Acts as a MHC class II receptor. When stimulated on its own, does not play a role in cytokine production or the release of cytotoxic granules by NK cells and cytotoxic CD8(+) T cells. Does not act as an Fc receptor. This is Fc receptor-like protein 6 (FCRL6) from Homo sapiens (Human).